Here is a 185-residue protein sequence, read N- to C-terminus: Ribosome-recycling factor (185 aa).

The protein belongs to the RRF family.

Its subcellular location is the cytoplasm. Its function is as follows. Responsible for the release of ribosomes from messenger RNA at the termination of protein biosynthesis. May increase the efficiency of translation by recycling ribosomes from one round of translation to another. This chain is Ribosome-recycling factor, found in Nitrosomonas eutropha (strain DSM 101675 / C91 / Nm57).